The chain runs to 179 residues: Large ribosomal subunit protein uL5 (179 aa).

This sequence belongs to the universal ribosomal protein uL5 family. As to quaternary structure, part of the 50S ribosomal subunit; part of the 5S rRNA/L5/L18/L25 subcomplex. Contacts the 5S rRNA and the P site tRNA. Forms a bridge to the 30S subunit in the 70S ribosome.

This is one of the proteins that bind and probably mediate the attachment of the 5S RNA into the large ribosomal subunit, where it forms part of the central protuberance. In the 70S ribosome it contacts protein S13 of the 30S subunit (bridge B1b), connecting the 2 subunits; this bridge is implicated in subunit movement. Contacts the P site tRNA; the 5S rRNA and some of its associated proteins might help stabilize positioning of ribosome-bound tRNAs. This Pseudomonas savastanoi pv. phaseolicola (strain 1448A / Race 6) (Pseudomonas syringae pv. phaseolicola (strain 1448A / Race 6)) protein is Large ribosomal subunit protein uL5.